A 511-amino-acid chain; its full sequence is Chromosomal replication initiator protein DnaA (511 aa).

Positions 1–87 (MSVELWQQCV…IGSKRSSAPR (87 aa)) are domain I, interacts with DnaA modulators. The domain II stretch occupies residues 87 to 174 (RAAPNAPLAA…QVEGALKHTS (88 aa)). The segment at 133–160 (VATHDEPSRDSFDPMAGASSQQAPARAE) is disordered. Residues 134 to 144 (ATHDEPSRDSF) are compositionally biased toward basic and acidic residues. A domain III, AAA+ region region spans residues 175 to 391 (YLNRTFTFEN…GALKRVIAHS (217 aa)). ATP contacts are provided by Gly-219, Gly-221, Lys-222, and Thr-223. Positions 392–511 (HFMGRDITIE…YKNLLRTLTT (120 aa)) are domain IV, binds dsDNA.

It belongs to the DnaA family. In terms of assembly, oligomerizes as a right-handed, spiral filament on DNA at oriC.

The protein localises to the cytoplasm. Its function is as follows. Plays an essential role in the initiation and regulation of chromosomal replication. ATP-DnaA binds to the origin of replication (oriC) to initiate formation of the DNA replication initiation complex once per cell cycle. Binds the DnaA box (a 9 base pair repeat at the origin) and separates the double-stranded (ds)DNA. Forms a right-handed helical filament on oriC DNA; dsDNA binds to the exterior of the filament while single-stranded (ss)DNA is stabiized in the filament's interior. The ATP-DnaA-oriC complex binds and stabilizes one strand of the AT-rich DNA unwinding element (DUE), permitting loading of DNA polymerase. After initiation quickly degrades to an ADP-DnaA complex that is not apt for DNA replication. Binds acidic phospholipids. This chain is Chromosomal replication initiator protein DnaA, found in Pseudomonas syringae pv. tomato (strain ATCC BAA-871 / DC3000).